The primary structure comprises 438 residues: Glucosamine kinase (438 aa).

Residues Lys-133, 186–188 (AYL), and Asp-193 each bind ATP. Asp-300 is a binding site for D-glucosamine. Mg(2+) is bound by residues Gln-305, Asp-317, and Asp-319. Residues 405 to 420 (QEVREYLYAVRHLPHW) carry the Substrate specificity determinant motif motif. Glu-409 provides a ligand contact to D-glucosamine.

This sequence belongs to the actinobacterial glucosamine kinase family. In terms of assembly, monomer. The cofactor is Mg(2+).

The catalysed reaction is D-glucosamine + ATP = D-glucosamine 6-phosphate + ADP + H(+). Its function is as follows. Catalyzes the ATP-dependent phosphorylation of D-glucosamine (GlcN) to D-glucosamine 6-phosphate. May be involved in the phosphorylation of acquired extracellular GlcN derived from the hydrolysis of chitosan, i.e., in the incorporation of exogenous GlcN into the bacterial GlcNAc metabolism. To a lesser extent, is also active on glucose, but is unable to phosphorylate maltose, 18 other sugars and several aminoglycoside antibiotics. This chain is Glucosamine kinase, found in Streptacidiphilus jiangxiensis.